We begin with the raw amino-acid sequence, 149 residues long: D-aminoacyl-tRNA deacylase (149 aa).

The short motif at 137-138 (GP) is the Gly-cisPro motif, important for rejection of L-amino acids element.

This sequence belongs to the DTD family. In terms of assembly, homodimer.

It localises to the cytoplasm. It carries out the reaction glycyl-tRNA(Ala) + H2O = tRNA(Ala) + glycine + H(+). It catalyses the reaction a D-aminoacyl-tRNA + H2O = a tRNA + a D-alpha-amino acid + H(+). Functionally, an aminoacyl-tRNA editing enzyme that deacylates mischarged D-aminoacyl-tRNAs. Also deacylates mischarged glycyl-tRNA(Ala), protecting cells against glycine mischarging by AlaRS. Acts via tRNA-based rather than protein-based catalysis; rejects L-amino acids rather than detecting D-amino acids in the active site. By recycling D-aminoacyl-tRNA to D-amino acids and free tRNA molecules, this enzyme counteracts the toxicity associated with the formation of D-aminoacyl-tRNA entities in vivo and helps enforce protein L-homochirality. The sequence is that of D-aminoacyl-tRNA deacylase from Syntrophobacter fumaroxidans (strain DSM 10017 / MPOB).